A 1309-amino-acid chain; its full sequence is Clustered mitochondria protein homolog (1309 aa).

Residues 1–34 (MLLNGDCPESLKKEAAAAEPPRENGLDEAGPGDE) form a disordered region. Residues 9–25 (ESLKKEAAAAEPPRENG) show a composition bias toward basic and acidic residues. Serine 279 and serine 281 each carry phosphoserine. The Clu domain occupies 335 to 577 (RAEDAYTSRL…RTFPPDLNFL (243 aa)). Residues 636–651 (LETPSSLENGGPSSLE) show a composition bias toward polar residues. A disordered region spans residues 636-674 (LETPSSLENGGPSSLESKSEDPPGQEAGSEEEGSSASGL). Phosphoserine is present on residues serine 654, serine 664, and serine 723. TPR repeat units follow at residues 978-1011 (AFHF…FNNV), 1020-1053 (CACL…SERV), 1104-1137 (ALLD…STKY), and 1146-1179 (ALSH…YKTQ). Residues 1264–1278 (HQLQEASRNRDRAEE) show a composition bias toward basic and acidic residues. A disordered region spans residues 1264-1309 (HQLQEASRNRDRAEEPMATEPAPAGAPGDLGSQPPAAKDPSPSVQG). Low complexity predominate over residues 1279-1290 (PMATEPAPAGAP).

Belongs to the CLU family.

It localises to the cytoplasm. Its subcellular location is the cytoplasmic granule. MRNA-binding protein involved in proper cytoplasmic distribution of mitochondria. Specifically binds mRNAs of nuclear-encoded mitochondrial proteins in the cytoplasm and regulates transport or translation of these transcripts close to mitochondria, playing a role in mitochondrial biogenesis. The chain is Clustered mitochondria protein homolog (CLUH) from Homo sapiens (Human).